Consider the following 453-residue polypeptide: Gamma-aminobutyric acid receptor subunit alpha-6 (453 aa).

The signal sequence occupies residues 1-19; sequence MLLLLPWLFSLLWIENAQA. Residues 20–243 lie on the Extracellular side of the membrane; that stretch reads QLEDEGNFYS…FHLQRKMGYF (224 aa). N-linked (GlcNAc...) asparagine glycosylation occurs at Asn31. Arg84 is a 4-aminobutanoate binding site. Residues Asn128 and Asn141 are each glycosylated (N-linked (GlcNAc...) asparagine). Thr147 is a binding site for 4-aminobutanoate. Cys156 and Cys170 are joined by a disulfide. A helical membrane pass occupies residues 244–264; the sequence is MIQIYTPCIMTVILSQVSFWI. Topologically, residues 265–270 are cytoplasmic; the sequence is NKESVP. The helical transmembrane segment at 271–290 threads the bilayer; it reads ARTVFGITTVLTMTTLSISA. The Extracellular portion of the chain corresponds to 291 to 304; that stretch reads RHSLPKVSYATAMD. Residues 305–325 traverse the membrane as a helical segment; it reads WFIAVCFAFVFSALIEFAAVN. Residues 326–422 are Cytoplasmic-facing; it reads YFTNLQSQKA…GTSKIDQYSR (97 aa). A Phosphoserine modification is found at Ser375. Position 403 is a phosphothreonine (Thr403). A helical membrane pass occupies residues 423 to 443; it reads ILFPVAFAGFNLVYWIVYLSK. The Extracellular portion of the chain corresponds to 444-453; that stretch reads DTMEVSSTVE.

Belongs to the ligand-gated ion channel (TC 1.A.9) family. Gamma-aminobutyric acid receptor (TC 1.A.9.5) subfamily. GABRA6 sub-subfamily. As to quaternary structure, heteropentamer, formed by a combination of alpha (GABRA1-6), beta (GABRB1-3), gamma (GABRG1-3), delta (GABRD), epsilon (GABRE), rho (GABRR1-3), pi (GABRP) and theta (GABRQ) chains, each subunit exhibiting distinct physiological and pharmacological properties. Binds UBQLN1. Expressed in brain, in cerebellar granule cells.

It is found in the postsynaptic cell membrane. The protein resides in the cell membrane. It catalyses the reaction chloride(in) = chloride(out). Functionally, alpha subunit of the heteropentameric ligand-gated chloride channel gated by gamma-aminobutyric acid (GABA), a major inhibitory neurotransmitter in the brain. GABA-gated chloride channels, also named GABA(A) receptors (GABAAR), consist of five subunits arranged around a central pore and contain GABA active binding site(s) located at the alpha and beta subunit interface(s). When activated by GABA, GABAARs selectively allow the flow of chloride anions across the cell membrane down their electrochemical gradient. Alpha-6/GABRA6 subunits are found at both synaptic and extrasynaptic sites. Chloride influx into the postsynaptic neuron following GABAAR opening decreases the neuron ability to generate a new action potential, thereby reducing nerve transmission. Extrasynaptic alpha-6-containing receptors contribute to the tonic GABAergic inhibition. Alpha-6 subunits are also present on glutamatergic synapses. The chain is Gamma-aminobutyric acid receptor subunit alpha-6 from Rattus norvegicus (Rat).